The sequence spans 453 residues: UDP-glycosyltransferase 76E1 (453 aa).

UDP-alpha-D-glucose contacts are provided by residues Ser272, 331–333 (APQ), 348–356 (HCGWNSTLE), and 370–373 (TGDQ).

Belongs to the UDP-glycosyltransferase family.

Functionally, possesses low quercetin 3-O-glucosyltransferase and 7-O-glucosyltransferase activities in vitro. The sequence is that of UDP-glycosyltransferase 76E1 (UGT76E1) from Arabidopsis thaliana (Mouse-ear cress).